A 514-amino-acid polypeptide reads, in one-letter code: WD repeat-containing protein 26 (514 aa).

Residues 9 to 84 (EHPSATKFRN…EYLEDGKVLE (76 aa)) form the CTLH domain. WD repeat units lie at residues 206–245 (EHCNEVWFCKFSNDGTKLATGSKDTTVIVWQVDADTHLLK), 252–291 (GHAYGVSYIAWSPDDSYLVACGPDDCSELWLWNVQTGELR), 297–337 (SHED…DSWE), 377–416 (QEDHPIMSFTISKNGRLALLNVATQGVHLWDLQDRVLVRK), 419–461 (GVTQ…PIAE), and 464–504 (GHTR…DHQN).

In terms of assembly, forms homooligomers. Identified in the CTLH complex that contains GID4, RANBP9 and/or RANBP10, MKLN1, MAEA, RMND5A (or alternatively its paralog RMND5B), GID8, ARMC8, WDR26 and YPEL5. Within this complex, MAEA, RMND5A (or alternatively its paralog RMND5B), GID8, WDR26, and RANBP9 and/or RANBP10 form the catalytic core, while GID4, MKLN1, ARMC8 and YPEL5 have ancillary roles. Interacts with DDB1-CUL4A/B E3 ligase complexes. Forms a complex composed of at least WDR26, a G-beta:gamma unit, and PLCB2. Interacts with AXIN1.

It localises to the cytoplasm. It is found in the nucleus. The protein localises to the mitochondrion. Functionally, G-beta-like protein involved in cell signal transduction. Acts as a negative regulator in MAPK signaling pathway. Functions as a scaffolding protein to promote G beta:gamma-mediated PLCB2 plasma membrane translocation and subsequent activation in leukocytes. Core component of the CTLH E3 ubiquitin-protein ligase complex that selectively accepts ubiquitin from UBE2H and mediates ubiquitination and subsequent proteasomal degradation of the transcription factor HBP1. Acts as a negative regulator of the canonical Wnt signaling pathway through preventing ubiquitination of beta-catenin CTNNB1 by the beta-catenin destruction complex, thus negatively regulating CTNNB1 degradation. Protects cells from oxidative stress-induced apoptosis via the down-regulation of AP-1 transcriptional activity as well as by inhibiting cytochrome c release from mitochondria. Also protects cells by promoting hypoxia-mediated autophagy and mitophagy. The polypeptide is WD repeat-containing protein 26 (Wdr26) (Rattus norvegicus (Rat)).